The chain runs to 365 residues: Donuts protein 1 (365 aa).

Positions 28-49 (NSGLELPSQDYTNVEEKESSPK) are disordered. A CUE domain is found at 82-125 (EKLCVLKELKIAFPEVDDTLIKAILIASQGVLEPAFNSLLYYSS). 2 disordered regions span residues 215-246 (HNTILSNEDSILKGKEKGKEEEKEKGEEKGVN) and 286-335 (ESEE…YKSA). Residues 224 to 244 (SILKGKEKGKEEEKEKGEEKG) are compositionally biased toward basic and acidic residues. Positions 286 to 295 (ESEEEEEQDV) are enriched in acidic residues. Residues 315–331 (EAQRDSADRLPAKDDGG) show a composition bias toward basic and acidic residues.

As to quaternary structure, may interact directly with ADY3. Probable component of a spindle pole body (SPB) complex composed of ADY3, SSP1, DON1, MPC54, SPO21/MPC70, NUD1 and CNM67.

The protein localises to the prospore membrane. Functionally, involved in the pathway that organizes the prospore membrane (PSM) during sporulation. This Saccharomyces cerevisiae (strain ATCC 204508 / S288c) (Baker's yeast) protein is Donuts protein 1 (DON1).